The sequence spans 234 residues: Sugar fermentation stimulation protein homolog (234 aa).

This sequence belongs to the SfsA family.

The chain is Sugar fermentation stimulation protein homolog from Photobacterium profundum (strain SS9).